The following is a 227-amino-acid chain: Phosphoribosylformylglycinamidine synthase subunit PurQ (227 aa).

One can recognise a Glutamine amidotransferase type-1 domain in the interval 2 to 227; it reads RWAIVRFPGA…FLGLVKEVAR (226 aa). Residue cysteine 85 is the Nucleophile of the active site. Active-site residues include histidine 200 and glutamate 202.

As to quaternary structure, part of the FGAM synthase complex composed of 1 PurL, 1 PurQ and 2 PurS subunits.

The protein resides in the cytoplasm. It catalyses the reaction N(2)-formyl-N(1)-(5-phospho-beta-D-ribosyl)glycinamide + L-glutamine + ATP + H2O = 2-formamido-N(1)-(5-O-phospho-beta-D-ribosyl)acetamidine + L-glutamate + ADP + phosphate + H(+). It carries out the reaction L-glutamine + H2O = L-glutamate + NH4(+). It participates in purine metabolism; IMP biosynthesis via de novo pathway; 5-amino-1-(5-phospho-D-ribosyl)imidazole from N(2)-formyl-N(1)-(5-phospho-D-ribosyl)glycinamide: step 1/2. Its function is as follows. Part of the phosphoribosylformylglycinamidine synthase complex involved in the purines biosynthetic pathway. Catalyzes the ATP-dependent conversion of formylglycinamide ribonucleotide (FGAR) and glutamine to yield formylglycinamidine ribonucleotide (FGAM) and glutamate. The FGAM synthase complex is composed of three subunits. PurQ produces an ammonia molecule by converting glutamine to glutamate. PurL transfers the ammonia molecule to FGAR to form FGAM in an ATP-dependent manner. PurS interacts with PurQ and PurL and is thought to assist in the transfer of the ammonia molecule from PurQ to PurL. This is Phosphoribosylformylglycinamidine synthase subunit PurQ from Thermus thermophilus (strain ATCC 27634 / DSM 579 / HB8).